Consider the following 310-residue polypeptide: Fe-S cluster assembly protein dre2 (310 aa).

An N-terminal SAM-like domain region spans residues 1–130 (MSGRTLLLSP…KPDIEDMRAV (130 aa)). Positions 131–203 (PLRLGRKKHD…EDLLDGSELA (73 aa)) are linker. Residues cysteine 212, cysteine 223, cysteine 226, and cysteine 228 each contribute to the [2Fe-2S] cluster site. Residues 212 to 228 (CRPKAGRRRRACKDCTC) are fe-S binding site A. 4 residues coordinate [4Fe-4S] cluster: cysteine 273, cysteine 276, cysteine 284, and cysteine 287. 2 short sequence motifs (cx2C motif) span residues 273–276 (CGNC) and 284–287 (CEGC). Positions 273 to 287 (CGNCSLGDAFRCEGC) are fe-S binding site B.

Belongs to the anamorsin family. As to quaternary structure, monomer. Interacts with tah18. Interacts with mia40. [2Fe-2S] cluster is required as a cofactor. It depends on [4Fe-4S] cluster as a cofactor.

The protein resides in the cytoplasm. It localises to the mitochondrion intermembrane space. Its function is as follows. Component of the cytosolic iron-sulfur (Fe-S) protein assembly (CIA) machinery required for the maturation of extramitochondrial Fe-S proteins. Part of an electron transfer chain functioning in an early step of cytosolic Fe-S biogenesis, facilitating the de novo assembly of a [4Fe-4S] cluster on the scaffold complex cfd1-nbp35. Electrons are transferred to dre2 from NADPH via the FAD- and FMN-containing protein tah18. Tah18-dre2 are also required for the assembly of the diferric tyrosyl radical cofactor of ribonucleotide reductase (RNR), probably by providing electrons for reduction during radical cofactor maturation in the catalytic small subunit rnr2. This Aspergillus clavatus (strain ATCC 1007 / CBS 513.65 / DSM 816 / NCTC 3887 / NRRL 1 / QM 1276 / 107) protein is Fe-S cluster assembly protein dre2.